We begin with the raw amino-acid sequence, 146 residues long: Snaclec 1 (146 aa).

An N-terminal signal peptide occupies residues 1–23 (MGRFIFMSFGLLVVFLSLSGTGA). 3 disulfide bridges follow: C25–C36, C53–C142, and C119–C134. The 112-residue stretch at 32–143 (YEGHCYRVFQ…CSRTYSFVCK (112 aa)) folds into the C-type lectin domain.

Belongs to the snaclec family. Heterodimer; disulfide-linked. As to expression, expressed by the venom gland.

Its subcellular location is the secreted. Interferes with one step of hemostasis (modulation of platelet aggregation, or coagulation cascade, for example). The chain is Snaclec 1 from Sistrurus catenatus edwardsii (Desert massasauga).